The primary structure comprises 78 residues: Large ribosomal subunit protein bL28 (78 aa).

It belongs to the bacterial ribosomal protein bL28 family.

The chain is Large ribosomal subunit protein bL28 from Aromatoleum aromaticum (strain DSM 19018 / LMG 30748 / EbN1) (Azoarcus sp. (strain EbN1)).